We begin with the raw amino-acid sequence, 776 residues long: MTAETRILELRAELDQHNYRYYVLDEPSVPDAEYDRLFNELKALEAEHPHLVTPDSPTQRVGGAALAAFSQVRHEVPMLSLGNAFEEADLREFGRRVVEGLDQPGAVDYSCEPKLDGLAVSLLYRDGQLVQGATRGDGTTGEDISANVRTVRNIPLKLQGKGWPAVLEVRGEVYMSKAGFDRLNAAQAEAGGKTFANPRNAAAGSLRQLDSKITASRPLEFCCYGVGQVSESIGDSHIGILEQLKAWGLPISRELKHAAGIEECLAYYRDIGERRNSLPYEIDGVVFKVNSLAAQRELGFRAREPRWAIAHKFPAMEELTEVLDVEFQVGRTGAVTPVARLKPVKVAGVTVSNATLHNMDEIARLGLRIGDTVIIRRAGDVIPQVMQVVLERRPQGARPVEVPSACPVCGSQVERTRLVKRSKGKETTSEGAVYRCVGRLACGAQLKQAIIHYVSRRAMDIDGLGEKSVEQLVDEGLIGSPADLYKLQFEQVVGLEGFAEVSTQKLLDAIEASKRPSLARFIYALGIPDVGEETAKVLARSLGSLARVQQALPQVLTYLPDIGLEVAYEIHNFFEDEHNQKVIQQLLDSGMQLQDEGELAAEFAASTTLAGMIAKLDIASVGPTGAEKLVARLDSLDKIIAADGIDLRQALAAKQADAVREFFKDEANQKLARDIEAQLLAFGMHWSSEKKVAEGLPLAGQTWVLTGTLERMSRDIAKDKLESLGAKVAGSVSGKTHCVVAGPGAGSKLAKAAELGVKVLDEDAFVTFLAEQGIAV.

NAD(+)-binding positions include 31 to 35 (DAEYD), 80 to 81 (SL), and Glu112. Catalysis depends on Lys114, which acts as the N6-AMP-lysine intermediate. Positions 135, 172, 288, and 312 each coordinate NAD(+). 4 residues coordinate Zn(2+): Cys406, Cys409, Cys436, and Cys442. Residues 693 to 776 (AEGLPLAGQT…TFLAEQGIAV (84 aa)) enclose the BRCT domain.

The protein belongs to the NAD-dependent DNA ligase family. LigA subfamily. Mg(2+) serves as cofactor. The cofactor is Mn(2+).

It catalyses the reaction NAD(+) + (deoxyribonucleotide)n-3'-hydroxyl + 5'-phospho-(deoxyribonucleotide)m = (deoxyribonucleotide)n+m + AMP + beta-nicotinamide D-nucleotide.. In terms of biological role, DNA ligase that catalyzes the formation of phosphodiester linkages between 5'-phosphoryl and 3'-hydroxyl groups in double-stranded DNA using NAD as a coenzyme and as the energy source for the reaction. It is essential for DNA replication and repair of damaged DNA. The protein is DNA ligase of Pseudomonas putida (strain ATCC 47054 / DSM 6125 / CFBP 8728 / NCIMB 11950 / KT2440).